We begin with the raw amino-acid sequence, 476 residues long: Inosine-5'-monophosphate dehydrogenase (476 aa).

CBS domains lie at isoleucine 93–isoleucine 151 and methionine 152–glutamate 211. Residues aspartate 242 and glycine 292–glycine 294 contribute to the NAD(+) site. Positions 294 and 296 each coordinate K(+). Serine 297 lines the IMP pocket. Cysteine 299 is a binding site for K(+). The active-site Thioimidate intermediate is cysteine 299. IMP-binding positions include aspartate 334–glycine 336, glycine 357–tyrosine 358, and tyrosine 381–glycine 385. Arginine 398 acts as the Proton acceptor in catalysis. Glutamate 408 contacts IMP. Residue glutamate 462 participates in K(+) binding.

This sequence belongs to the IMPDH/GMPR family. In terms of assembly, homotetramer. It depends on K(+) as a cofactor.

The enzyme catalyses IMP + NAD(+) + H2O = XMP + NADH + H(+). It functions in the pathway purine metabolism; XMP biosynthesis via de novo pathway; XMP from IMP: step 1/1. Mycophenolic acid (MPA) is a non-competitive inhibitor that prevents formation of the closed enzyme conformation by binding to the same site as the amobile flap. In contrast, mizoribine monophosphate (MZP) is a competitive inhibitor that induces the closed conformation. MPA is a potent inhibitor of mammalian IMPDHs but a poor inhibitor of the bacterial enzymes. MZP is a more potent inhibitor of bacterial IMPDH. Functionally, catalyzes the conversion of inosine 5'-phosphate (IMP) to xanthosine 5'-phosphate (XMP), the first committed and rate-limiting step in the de novo synthesis of guanine nucleotides, and therefore plays an important role in the regulation of cell growth. This chain is Inosine-5'-monophosphate dehydrogenase, found in Korarchaeum cryptofilum (strain OPF8).